A 112-amino-acid chain; its full sequence is Nitrogen regulatory protein P-II (112 aa).

S49 carries the post-translational modification Phosphoserine. At Y51 the chain carries O-UMP-tyrosine.

This sequence belongs to the P(II) protein family. In terms of assembly, homotrimer. Phosphorylation dependent on the nitrogen source and spectral light quality.

Its function is as follows. P-II indirectly controls the transcription of the GS gene (glnA). P-II prevents NR-II-catalyzed conversion of NR-I to NR-I-phosphate, the transcriptional activator of glnA. When P-II is phosphorylated, these events are reversed. In nitrogen-limiting conditions, when the ratio of Gln to 2-ketoglutarate decreases, P-II is phosphorylated which allows the deadenylation of glutamine synthetase (GS), thus activating the enzyme. This is Nitrogen regulatory protein P-II (glnB) from Microchaete diplosiphon (Fremyella diplosiphon).